Reading from the N-terminus, the 306-residue chain is Glutaminase (306 aa).

The substrate site is built by serine 61, asparagine 111, glutamate 157, asparagine 164, tyrosine 188, tyrosine 240, and valine 258.

This sequence belongs to the glutaminase family. In terms of assembly, homotetramer.

It catalyses the reaction L-glutamine + H2O = L-glutamate + NH4(+). The sequence is that of Glutaminase from Pseudoalteromonas atlantica (strain T6c / ATCC BAA-1087).